We begin with the raw amino-acid sequence, 607 residues long: Arginine--tRNA ligase, cytoplasmic (607 aa).

Alanine 2 is subject to N-acetylalanine. Serine 15 is subject to Phosphoserine. Interaction with tRNA stretches follow at residues 59–60 (EW) and 106–111 (NGPFIQ). L-arginine contacts are provided by residues 148–153 (EFSSPN), histidine 162, tyrosine 347, aspartate 351, and glutamine 375. The short motif at 151-162 (SPNIAKPFHAGH) is the 'HIGH' region element. Residues 484 to 498 (DTGPYLQYAHSRLRS) form an interaction with tRNA region.

Belongs to the class-I aminoacyl-tRNA synthetase family. Monomer.

The protein resides in the cytoplasm. The protein localises to the cytosol. It carries out the reaction tRNA(Arg) + L-arginine + ATP = L-arginyl-tRNA(Arg) + AMP + diphosphate. Forms part of a macromolecular complex that catalyzes the attachment of specific amino acids to cognate tRNAs during protein synthesis. The sequence is that of Arginine--tRNA ligase, cytoplasmic from Saccharomyces cerevisiae (strain ATCC 204508 / S288c) (Baker's yeast).